Here is a 677-residue protein sequence, read N- to C-terminus: Sulfate transporter 2.2 (677 aa).

Residues 1–110 are Cytoplasmic-facing; the sequence is MQLSSLSHTS…QYKLNLFKKD (110 aa). Residues 111–131 form a helical membrane-spanning segment; sequence LMAGLTLASLCIPQSIGYANL. At 132-133 the chain is on the extracellular side; that stretch reads AG. Residues 134-154 form a helical membrane-spanning segment; that stretch reads LDPEYGLYTSVVPPLIYSTMG. Residues 155 to 158 lie on the Cytoplasmic side of the membrane; that stretch reads TSRE. A helical membrane pass occupies residues 159 to 179; that stretch reads LAIGPVAVVSLLLSSMVRDLQ. Residues 180-190 lie on the Extracellular side of the membrane; sequence DPVTDPIAYRK. A helical membrane pass occupies residues 191–211; the sequence is IVFTVTFFAGAFQAIFGLFRL. At 212 to 213 the chain is on the cytoplasmic side; it reads GF. A helical transmembrane segment spans residues 214–234; that stretch reads LVDFLSHAALVGFMAGAAIVI. Residues 235 to 270 lie on the Extracellular side of the membrane; that stretch reads GLQQLKGLFGLTHFTNKTDVVSVLSSVFHSLHHPWQ. N-linked (GlcNAc...) asparagine glycosylation is present at Asn250. The helical transmembrane segment at 271 to 291 threads the bilayer; sequence PLNFVIGSSFLIFILLARFIG. The Cytoplasmic portion of the chain corresponds to 292–296; the sequence is KRNNK. Residues 297–317 form a helical membrane-spanning segment; that stretch reads LFWIPAMAPLISVVLATLIVY. The Extracellular segment spans residues 318–352; that stretch reads LSNAESRGVKIVKHIKPGFNQLSVNQLQFKSPHLG. The chain crosses the membrane as a helical span at residues 353-373; that stretch reads QIAKIGLISAIIALTEAIAVG. Over 374-389 the chain is Cytoplasmic; that stretch reads RSFATIKGYRLDGNKE. Residues 390–410 form a helical membrane-spanning segment; it reads MMAMGFMNIAGSLSSCYVATG. Over 411 to 422 the chain is Extracellular; it reads SFSRTAVNFSAG. Asn418 carries an N-linked (GlcNAc...) asparagine glycan. The chain crosses the membrane as a helical span at residues 423–443; sequence CETVVSNIVMAITVMISLEVL. The Cytoplasmic segment spans residues 444 to 446; sequence TRF. The helical transmembrane segment at 447 to 467 threads the bilayer; that stretch reads LYFTPTAILASIILSALPGLI. Residues 468–482 lie on the Extracellular side of the membrane; sequence DVSGALHIWKLDKLD. Residues 483–503 traverse the membrane as a helical segment; it reads FLVLIAAFFGVLFASVEIGLL. Residues 504–677 lie on the Cytoplasmic side of the membrane; that stretch reads LAVGISFARI…RARSTSHELC (174 aa). One can recognise an STAS domain in the interval 540–666; it reads YPMANKTAGL…MTVGEAVDIY (127 aa).

Belongs to the SLC26A/SulP transporter (TC 2.A.53) family. In terms of tissue distribution, expressed in the phloem in roots and in the phloem of vascular bundles in leaves.

The protein resides in the membrane. Its function is as follows. Low-affinity H(+)/sulfate cotransporter that may be involved in the distribution of sulfate from vascular bundles to the palisade cells of the leaves. Plays a central role in the regulation of sulfate assimilation. This chain is Sulfate transporter 2.2 (SULTR2;2), found in Arabidopsis thaliana (Mouse-ear cress).